We begin with the raw amino-acid sequence, 283 residues long: Putative Ig-like domain-containing protein ORF10 (283 aa).

An N-terminal signal peptide occupies residues 1–55; it reads MIDKRNKKAVTHISTCLCHSSIPIYGDSPFLNTHRAAMDPRPLVLLLLLASHIST. Residues asparagine 75, asparagine 92, asparagine 121, asparagine 157, asparagine 179, asparagine 198, asparagine 223, and asparagine 229 are each glycosylated (N-linked (GlcNAc...) asparagine; by host). One can recognise an Ig-like domain in the interval 129–227; sequence QPLGQSIHHA…IDQQTNLTLT (99 aa).

This is Putative Ig-like domain-containing protein ORF10 from Galliformes (FAdV-1).